The sequence spans 1158 residues: ATP-dependent helicase/deoxyribonuclease subunit B (1158 aa).

It belongs to the helicase family. AddB/RexB type 2 subfamily. In terms of assembly, heterodimer of AddA and RexB. It depends on Mg(2+) as a cofactor.

In terms of biological role, the heterodimer acts as both an ATP-dependent DNA helicase and an ATP-dependent, dual-direction single-stranded exonuclease. Recognizes the chi site generating a DNA molecule suitable for the initiation of homologous recombination. This subunit has 5' -&gt; 3' nuclease activity but not helicase activity. This is ATP-dependent helicase/deoxyribonuclease subunit B from Lactobacillus johnsonii (strain CNCM I-12250 / La1 / NCC 533).